We begin with the raw amino-acid sequence, 141 residues long: Putative pre-16S rRNA nuclease (141 aa).

The protein belongs to the YqgF nuclease family.

It localises to the cytoplasm. Its function is as follows. Could be a nuclease involved in processing of the 5'-end of pre-16S rRNA. This Pseudomonas putida (strain ATCC 47054 / DSM 6125 / CFBP 8728 / NCIMB 11950 / KT2440) protein is Putative pre-16S rRNA nuclease.